The following is a 93-amino-acid chain: Envelope small membrane protein (93 aa).

The Virion surface segment spans residues 1–11 (MMNLLNKSLEE). A helical transmembrane segment spans residues 12-32 (NGSVLTAFYIFVAFVALYLLG). Residues 33–93 (RALQAFVQAA…NEFPKNGWKQ (61 aa)) lie on the Intravirion side of the membrane.

The protein belongs to the gammacoronaviruses E protein family. Homooligomer. Interacts with the M membrane protein in the budding compartment of the host cell, which is located between endoplasmic reticulum and the Golgi complex. The cytoplasmic tails of both proteins are important for this function. Interacts with Nucleoprotein.

The protein localises to the host Golgi apparatus membrane. Plays a central role in virus morphogenesis and assembly. Acts as a viroporin and self-assembles in host membranes forming pentameric protein-lipid pores that allow ion transport. Also plays a role in the induction of apoptosis. In Avian infectious bronchitis virus (strain Portugal/322/82) (IBV), this protein is Envelope small membrane protein.